Here is an 822-residue protein sequence, read N- to C-terminus: Cadherin-3 (822 aa).

The first 25 residues, 1 to 25, serve as a signal peptide directing secretion; the sequence is MELLSGPHAFLLLLLQVCWLRSVVS. Positions 26–99 are excised as a propeptide; the sequence is EPYRAGFIGE…PTRILRRRKR (74 aa). Cadherin domains follow at residues 100–207, 208–320, 321–432, 433–538, and 539–645; these read EWVM…KPKF, TQDT…APEF, EPQK…APVF, VPPS…DHGP, and IPEP…RPWK. Over 100-647 the chain is Extracellular; it reads EWVMPPIFVP…NDCPRPWKGG (548 aa). An N-linked (GlcNAc...) asparagine glycan is attached at Asn-192. Asn-558 is a glycosylation site (N-linked (GlcNAc...) asparagine). A helical transmembrane segment spans residues 648–670; that stretch reads FILPILGAVLALLTLLLALLLLV. At 671-822 the chain is on the cytoplasmic side; sequence RKKRKVKEPL…ADMYGGGEDD (152 aa).

As to quaternary structure, interacts with CDCP1 and CTNNB1.

The protein localises to the cell membrane. Functionally, cadherins are calcium-dependent cell adhesion proteins. They preferentially interact with themselves in a homophilic manner in connecting cells; cadherins may thus contribute to the sorting of heterogeneous cell types. This chain is Cadherin-3 (Cdh3), found in Mus musculus (Mouse).